Reading from the N-terminus, the 250-residue chain is 2,3-bisphosphoglycerate-dependent phosphoglycerate mutase (250 aa).

Substrate contacts are provided by residues 10 to 17 (RHGESQWN), 23 to 24 (TG), arginine 62, 89 to 92 (ERHY), lysine 100, 116 to 117 (RR), and 185 to 186 (GN). The active-site Tele-phosphohistidine intermediate is the histidine 11. The active-site Proton donor/acceptor is the glutamate 89.

It belongs to the phosphoglycerate mutase family. BPG-dependent PGAM subfamily. As to quaternary structure, homodimer.

The enzyme catalyses (2R)-2-phosphoglycerate = (2R)-3-phosphoglycerate. Its pathway is carbohydrate degradation; glycolysis; pyruvate from D-glyceraldehyde 3-phosphate: step 3/5. Its function is as follows. Catalyzes the interconversion of 2-phosphoglycerate and 3-phosphoglycerate. This Salmonella choleraesuis (strain SC-B67) protein is 2,3-bisphosphoglycerate-dependent phosphoglycerate mutase.